The following is a 284-amino-acid chain: Cell wall mannoprotein 1 (284 aa).

Positions Met1–Ala17 are cleaved as a signal peptide. The segment covering Ser176 to Thr234 has biased composition (low complexity). A disordered region spans residues Ser176–Thr252.

The protein belongs to the cell wall mannoprotein 1 family. Post-translationally, galactomannoprotein, glycosylated.

The protein resides in the secreted. Its subcellular location is the cell wall. In terms of biological role, constitutive protein of the cell wall. Antigen target of host humoral immune response. The polypeptide is Cell wall mannoprotein 1 (Aspergillus fumigatus (Neosartorya fumigata)).